The sequence spans 621 residues: Chaperone protein HscA homolog (621 aa).

It belongs to the heat shock protein 70 family.

Chaperone involved in the maturation of iron-sulfur cluster-containing proteins. Has a low intrinsic ATPase activity which is markedly stimulated by HscB. The protein is Chaperone protein HscA homolog of Cupriavidus pinatubonensis (strain JMP 134 / LMG 1197) (Cupriavidus necator (strain JMP 134)).